Reading from the N-terminus, the 382-residue chain is uncharacterized protein (382 aa).

This is an uncharacterized protein from Bacillus subtilis (strain 168).